We begin with the raw amino-acid sequence, 606 residues long: Maternal effect protein oskar (606 aa).

The region spanning 152–221 is the HTH OST-type domain; it reads EYPDIDSEVR…SGKRIFNLKA (70 aa). A phosphoserine mark is found at serine 270 and serine 275. Residues 425–439 are leucine-zipper; it reads LMGDDFMLYLARMEL.

Interacts with smaug (smg). In terms of assembly, interacts with yl/yolkless. As to expression, begins to accumulate at the posterior pole of the oocyte from stage 8 onwards.

It localises to the endosome. Its function is as follows. Organizes the germ plasm and directs localization of the posterior determinant nanos. Oskar protein is required to keep nanos (nos) RNA and staufen protein at the posterior pole. This Drosophila melanogaster (Fruit fly) protein is Maternal effect protein oskar (osk).